A 3530-amino-acid polypeptide reads, in one-letter code: Unconventional myosin-XV (3530 aa).

Disordered regions lie at residues 1 to 46 (MAKE…RTPK), 615 to 710 (AGMD…PAHV), and 730 to 1057 (EVPP…QKTL). Over residues 663 to 681 (PPVPPRPPSSGPPPAPPLS) the composition is skewed to pro residues. Low complexity-rich tracts occupy residues 682 to 693 (PALSGLPRPASP), 753 to 763 (AAFGFPGASPR), and 823 to 835 (SPAP…RLGP). Over residues 836–850 (PGSPLPGSPRPPSPP) the composition is skewed to pro residues. The span at 859 to 869 (RSSLNLPSRLP) shows a compositional bias: low complexity. Residues 903–913 (PLEHRESPREP) show a composition bias toward basic and acidic residues. Positions 1027–1038 (TKPPTPAPPKDV) are enriched in pro residues. Residues 1222–1899 (DGVEDMTQLE…LYQLLESMRE (678 aa)) enclose the Myosin motor domain. 1315-1322 (GESGSGKT) contacts ATP. Residues 1323 to 1350 (EATKLILRYLAAMNQKREVMQQIKILEA) are a coiled coil. An actin-binding region spans residues 1792–1799 (FMRCLKPN). Residues 1888 to 2029 (EHLYQLLESM…AQVPQVAPVR (142 aa)) form a neck or regulatory domain region. IQ domains follow at residues 1902–1924 (LNLA…RFRS), 1925–1954 (LRHK…SLVK), and 1955–1976 (FRSL…AEWR). A tail region spans residues 2030-3530 (TPRLQAEPRV…TLPPSEITLL (1501 aa)). Positions 2065-2217 (MLTVPLRTPL…PTQLEWTATY (153 aa)) constitute a MyTH4 1 domain. Disordered regions lie at residues 2311-2381 (AASR…GEPA), 2414-2446 (YRMK…IPGL), 2490-2509 (AEKP…GPPA), and 2644-2665 (TSAP…LEPP). A compositionally biased stretch (polar residues) spans 2349–2371 (GYSSHNQDGTNGETEAQRGTATH). A compositionally biased stretch (gly residues) spans 2417–2427 (KGGGQPGGGSS). Positions 2867-2953 (KDSDYVVAVR…PSELVQPAAA (87 aa)) constitute an SH3 domain. The 155-residue stretch at 3050–3204 (FTKTPLQESL…PSSIELRAML (155 aa)) folds into the MyTH4 2 domain. The FERM domain occupies 3209-3530 (SKRQLFLLPG…TLPPSEITLL (322 aa)).

It belongs to the TRAFAC class myosin-kinesin ATPase superfamily. Myosin family. As to quaternary structure, interacts with the third PDZ domain of WHRN which is necessary for localization of WHRN to stereocilium tips. Interacts with EPS8. Interacts with FASLG. As to expression, highly expressed in pituitary. Also expressed at lower levels in adult brain, kidney, liver, lung, pancreas, placenta and skeletal muscle. Not expressed in brain. In the pituitary, highly expressed in anterior gland cells.

Its subcellular location is the cell projection. It is found in the stereocilium. The protein resides in the cytoplasm. It localises to the cytoskeleton. Functionally, myosins are actin-based motor molecules with ATPase activity. Unconventional myosins serve in intracellular movements. Their highly divergent tails are presumed to bind to membranous compartments, which would be moved relative to actin filaments. Required for the arrangement of stereocilia in mature hair bundles. This is Unconventional myosin-XV (MYO15A) from Homo sapiens (Human).